We begin with the raw amino-acid sequence, 77 residues long: Translation initiation factor IF-1, chloroplastic (77 aa).

The 71-residue stretch at 1–71 folds into the S1-like domain; the sequence is MKEQKLIHEG…TRGRIIYRLR (71 aa).

This sequence belongs to the IF-1 family. In terms of assembly, component of the 30S ribosomal translation pre-initiation complex which assembles on the 30S ribosome in the order IF-2 and IF-3, IF-1 and N-formylmethionyl-tRNA(fMet); mRNA recruitment can occur at any time during PIC assembly.

It is found in the plastid. Its subcellular location is the chloroplast. One of the essential components for the initiation of protein synthesis. Stabilizes the binding of IF-2 and IF-3 on the 30S subunit to which N-formylmethionyl-tRNA(fMet) subsequently binds. Helps modulate mRNA selection, yielding the 30S pre-initiation complex (PIC). Upon addition of the 50S ribosomal subunit IF-1, IF-2 and IF-3 are released leaving the mature 70S translation initiation complex. The chain is Translation initiation factor IF-1, chloroplastic from Cabomba caroliniana (Carolina fanwort).